A 226-amino-acid polypeptide reads, in one-letter code: ATP synthase subunit a (226 aa).

5 consecutive transmembrane segments (helical) span residues 17-37 (FLFV…AKLA), 78-98 (LVAT…IPGF), 104-124 (NINF…FEGI), 175-195 (LFVW…GFAL), and 201-221 (FLQT…AVLL).

Belongs to the ATPase A chain family. As to quaternary structure, F-type ATPases have 2 components, CF(1) - the catalytic core - and CF(0) - the membrane proton channel. CF(1) has five subunits: alpha(3), beta(3), gamma(1), delta(1), epsilon(1). CF(0) has three main subunits: a(1), b(2) and c(9-12). The alpha and beta chains form an alternating ring which encloses part of the gamma chain. CF(1) is attached to CF(0) by a central stalk formed by the gamma and epsilon chains, while a peripheral stalk is formed by the delta and b chains.

The protein localises to the cell inner membrane. In terms of biological role, key component of the proton channel; it plays a direct role in the translocation of protons across the membrane. This chain is ATP synthase subunit a, found in Nitratiruptor sp. (strain SB155-2).